A 929-amino-acid polypeptide reads, in one-letter code: Valine--tRNA ligase (929 aa).

The 'HIGH' region signature appears at 40–50; sequence PNVTGHLHMGH. The short motif at 522–526 is the 'KMSKS' region element; it reads KMSKS. An ATP-binding site is contributed by K525. Residues 855-926 are a coiled coil; that stretch reads LAGLIDKEAE…LEQQHAEITD (72 aa).

It belongs to the class-I aminoacyl-tRNA synthetase family. ValS type 1 subfamily. Monomer.

It is found in the cytoplasm. The enzyme catalyses tRNA(Val) + L-valine + ATP = L-valyl-tRNA(Val) + AMP + diphosphate. Functionally, catalyzes the attachment of valine to tRNA(Val). As ValRS can inadvertently accommodate and process structurally similar amino acids such as threonine, to avoid such errors, it has a 'posttransfer' editing activity that hydrolyzes mischarged Thr-tRNA(Val) in a tRNA-dependent manner. The polypeptide is Valine--tRNA ligase (Nitrosococcus oceani (strain ATCC 19707 / BCRC 17464 / JCM 30415 / NCIMB 11848 / C-107)).